Here is a 1460-residue protein sequence, read N- to C-terminus: Cilia- and flagella-associated protein 43 (1460 aa).

WD repeat units lie at residues 46–87, 91–132, 184–221, 303–342, 428–468, 529–569, 589–628, 911–951, and 1129–1170; these read EGRY…HLQC, VATV…RLVK, SKGHYFHSCVWGTEGLYCGAGRGQVVLLDELRTDMKNY, RRRSASDTVKLLVLGGLVVIVCLDGSLVTYDQDTNTAGHT, IFAC…DSAS, MRDH…MKLP, FGRGGITCLSVWNAAGGFVCGGNDSVVHLVPVGKSPIHYS, EIDP…VTEV, and NRRF…CRAV. 2 coiled-coil regions span residues 1170–1214 and 1399–1446; these read VVEA…AEEA and LGEH…LREA.

The protein belongs to the CFAP43 family.

Its subcellular location is the cell projection. The protein localises to the cilium. The protein resides in the flagellum. It localises to the cytoplasm. It is found in the cytoskeleton. Its subcellular location is the flagellum axoneme. In terms of biological role, flagellar protein involved in flagellum axoneme organization and function. The polypeptide is Cilia- and flagella-associated protein 43 (Trypanosoma brucei brucei (strain 927/4 GUTat10.1)).